We begin with the raw amino-acid sequence, 517 residues long: MIVKFHARGKGGGSGPVDYLLGRERNREGATVLQGNPEEVRELIDATPFAKKYTSGVLSFAEKELPPGGREKVMASFERVLMPGLEKNQYSILWVEHQDKGRLELNFVIPNMELQTGKRLQPYYDRADRPRIDAWQTLVNHHYGLHDPNAPENRRTLTLPDNLPETKQALAEGVTRGIDALYHAGEIKGRQDVIQALTEAGLEVVRVTRTSISIADPNGGKNIRLKGAFYEQSFADGRGVREKAERESRIYRENAEQRVQEARRICKRGCDIKRDENQRRYSPVHSLDRGIAGKTPGRGERGDDAAQEGRVKAGREYGHDVTGDSLSPVYREWRDALVSWREDTGEPGRNQEAGRDIAETEREDMGRGVCAGREQEIPCPSVREISGGDSLSGERVGTSEGVTQSDRAGNTFAERLRAAATGLYAAAERMGERLRGIAEDVFAYATGQRDAERAGHAVESAGAALERADRTLEPVIQRELEIREERLIQEREHVLSLERERQPEIQERTLDGPSLGW.

Catalysis depends on tyrosine 19, which acts as the O-(5'-phospho-DNA)-tyrosine intermediate. Residues histidine 97, glutamate 104, and asparagine 106 each contribute to the a divalent metal cation site. Disordered regions lie at residues 281-310 (YSPV…QEGR), 380-405 (PSVR…VTQS), and 496-517 (SLER…SLGW). Over residues 297 to 310 (GRGERGDDAAQEGR) the composition is skewed to basic and acidic residues. Over residues 496 to 510 (SLERERQPEIQERTL) the composition is skewed to basic and acidic residues.

It to E.coli MbaA and MbkA. Interacts with MbeB and MbeC to form the relaxosome. Mn(2+) serves as cofactor. The cofactor is Co(2+). Ni(2+) is required as a cofactor.

The enzyme catalyses ATP-independent breakage of single-stranded DNA, followed by passage and rejoining.. In terms of biological role, relaxase involved in plasmid ColE1 conjugative mobilization and is thus essential to promote the specific transfer of the plasmid during conjugation. First catalyzes the specific cleavage of one of the DNA strands at oriT, forming a covalent 5'-phosphotyrosine intermediate. The nic site corresponds to 5'-(1469)CTGG/CTTA(1462)-3' in the cleaved strand. The cleaved strand is then transferred through the dedicated type IV secretion apparatus. MbeA remains covalently linked at the 5' end of the strand, and once in the recipient cell, it probably catalyzes the rejoining of the two ends of the strand, re-forming the circular plasmid DNA. Is functional in vitro without a requirement for the conjugative accessory proteins. The sequence is that of DNA relaxase MbeA (mbeA) from Escherichia coli.